The sequence spans 24 residues: Humanin (24 aa).

A sufficient to interact with BID and BIM and to suppress BID and BIM activity region spans residues 1–12 (MAPRGFSCLLLL). The segment at 3–19 (PRGFSCLLLLTSEIDLP) is sufficient for neuroprotective activity. Positions 5 to 12 (GFSCLLLL) are sufficient to interact with MPP8. 2 required for secretion regions span residues 9–11 (LLL) and 19–20 (PV).

Homodimer. Interacts with amyloid-beta protein 42 (Abeta42); the interaction prevents Abeta42 fibril formation. Interacts with BAX; forms fibers with BAX which results in BAX conformational changes and sequestering of BAX into the fibers, preventing BAX activation. Interacts with both full-length BID and cleaved BID p15; forms fibers with BID which results in BID conformational changes and sequestering of BID into the fibers, preventing BID activation. Interacts with BIM isoform BimEL but not with BIM isoforms BimL or BimS; the interaction prevents BIM-induced apoptosis. Interacts with IGFBP3; competes with importin KPNB1 for binding to IGFBP3, blocking IGFBP3 nuclear import. Interacts with TRIM11. Interacts with MPP8. Expressed in testis, seminal plasma and sperm (at protein level). Higher seminal plasma levels are associated with normospermia than with oligospermia, asthenospermia or oligoasthenospermia (at protein level). Higher sperm levels are associated with normospermia than with asthenospermia (at protein level). Expressed in retinal epithelial cells (at protein level). Expressed in the heart, skeletal muscle, kidney and liver. Lesser but significant expression is observed in the brain and the gastrointestinal tract. Expressed in the AD brain, where it is found in some of the large intact neurons of the occipital lobes and small and round reactive glial cells in the hippocampus.

It is found in the secreted. It localises to the cytoplasm. Its subcellular location is the cell projection. The protein localises to the cilium. The protein resides in the flagellum. It is found in the nucleus. It localises to the mitochondrion. In terms of biological role, plays a role as a neuroprotective factor. Protects against neuronal cell death induced by multiple different familial Alzheimer disease genes and amyloid-beta proteins in Alzheimer disease. Mediates its neuroprotective effect by interacting with a receptor complex composed of IL6ST/GP130, IL27RA/WSX1 and CNTFR. Also acts as a ligand for G-protein coupled receptors FPR2/FPRL1 and FPR3/FPRL2. Inhibits amyloid-beta protein 40 fibril formation. Also inhibits amyloid-beta protein 42 fibril formation. Suppresses apoptosis by binding to BAX and preventing the translocation of BAX from the cytosol to mitochondria. Also suppresses apoptosis by binding to BID and inhibiting the interaction of BID with BAX and BAK which prevents oligomerization of BAX and BAK and suppresses release of apoptogenic proteins from mitochondria. Forms fibers with BAX and also with BID, inducing BAX and BID conformational changes and sequestering them into the fibers which prevents their activation. Can also suppress apoptosis by interacting with BIM isoform BimEL, inhibiting BimEL-induced activation of BAX, blocking oligomerization of BAX and BAK, and preventing release of apoptogenic proteins from mitochondria. Plays a role in up-regulation of anti-apoptotic protein BIRC6/APOLLON, leading to inhibition of neuronal cell death. Binds to IGFBP3 and specifically blocks IGFBP3-induced cell death. Competes with importin KPNB1 for binding to IGFBP3 which is likely to block IGFBP3 nuclear import. Induces chemotaxis of mononuclear phagocytes via FPR2/FPRL1. Reduces aggregation and fibrillary formation by suppressing the effect of APP on mononuclear phagocytes and acts by competitively inhibiting the access of FPR2 to APP. Protects retinal pigment epithelium (RPE) cells against oxidative stress-induced and endoplasmic reticulum (ER) stress-induced apoptosis. Promotes mitochondrial biogenesis in RPE cells following oxidative stress and promotes STAT3 phosphorylation which leads to inhibition of CASP3 release. Also reduces CASP4 levels in RPE cells, suppresses ER stress-induced mitochondrial superoxide production and plays a role in up-regulation of mitochondrial glutathione. Reduces testicular hormone deprivation-induced apoptosis of germ cells at the nonandrogen-sensitive stages of the seminiferous epithelium cycle. Protects endothelial cells against free fatty acid-induced inflammation by suppressing oxidative stress, reducing expression of TXNIP and inhibiting activation of the NLRP3 inflammasome which inhibits expression of pro-inflammatory cytokines IL1B and IL18. Protects against high glucose-induced endothelial cell dysfunction by mediating activation of ERK5 which leads to increased expression of transcription factor KLF2 and prevents monocyte adhesion to endothelial cells. Inhibits the inflammatory response in astrocytes. Increases the expression of PPARGC1A/PGC1A in pancreatic beta cells which promotes mitochondrial biogenesis. Increases insulin sensitivity. The chain is Humanin from Homo sapiens (Human).